Reading from the N-terminus, the 375-residue chain is Eukaryotic translation initiation factor 3 subunit M (375 aa).

The 160-residue stretch at 180-339 (AAAKVMVELL…RKVVVSHSTH (160 aa)) folds into the PCI domain.

Belongs to the eIF-3 subunit M family. As to quaternary structure, component of the eukaryotic translation initiation factor 3 (eIF-3) complex, which is composed of 13 subunits: eif3a, eif3b, eif3c, eif3d, eif3e, eif3f, eif3g, eif3h, eif3i, eif3j, eif3k, eif3l and eif3m.

It is found in the cytoplasm. Component of the eukaryotic translation initiation factor 3 (eIF-3) complex, which is involved in protein synthesis of a specialized repertoire of mRNAs and, together with other initiation factors, stimulates binding of mRNA and methionyl-tRNAi to the 40S ribosome. The eIF-3 complex specifically targets and initiates translation of a subset of mRNAs involved in cell proliferation. This is Eukaryotic translation initiation factor 3 subunit M (eif3m) from Danio rerio (Zebrafish).